The following is a 496-amino-acid chain: Cytochrome P450 71D181 (496 aa).

Residues 1 to 21 form a helical; Signal-anchor for type II membrane protein membrane-spanning segment; that stretch reads MDISILWVAIILVISSYFIFM. C435 contacts heme. A disordered region spans residues 471–496; it reads MSETPGLSGPRKNPLIMVPTIHNPTS.

It belongs to the cytochrome P450 family. Heme serves as cofactor.

The protein localises to the membrane. The enzyme catalyses gamma-terpinene + 2 reduced [NADPH--hemoprotein reductase] + 2 O2 = carvacrol + 2 oxidized [NADPH--hemoprotein reductase] + 3 H2O + 2 H(+). It carries out the reaction (4S)-limonene + reduced [NADPH--hemoprotein reductase] + O2 = (1S,5R)-carveol + oxidized [NADPH--hemoprotein reductase] + H2O + H(+). The catalysed reaction is (4R)-limonene + reduced [NADPH--hemoprotein reductase] + O2 = (1R,5S)-carveol + oxidized [NADPH--hemoprotein reductase] + H2O + H(+). It catalyses the reaction alpha-terpinene + 2 reduced [NADPH--hemoprotein reductase] + 2 O2 = carvacrol + 2 oxidized [NADPH--hemoprotein reductase] + 3 H2O + 2 H(+). It functions in the pathway secondary metabolite biosynthesis; terpenoid biosynthesis. Involved in the biosynthesis of phenolic monoterpenes natural products thymol and carvacrol which have a broad range of biological activities acting as antimicrobial compounds, insecticides, antioxidants and pharmaceutical agents. Catalyzes the C2-hydroxylation of gamma-terpinene and alpha-terpinene to produce carvacrol. Also mediates the C6-hydroxylation of (4S)-limonene and (4R)-limonene to form carveol. This chain is Cytochrome P450 71D181, found in Thymus vulgaris (Thyme).